Consider the following 386-residue polypeptide: GTPase Obg (386 aa).

The Obg domain occupies 1–159 (MKFIDEARIE…RTLKLELKVL (159 aa)). The 189-residue stretch at 160 to 348 (ADVGLLGMPN…LTFAIMSYLD (189 aa)) folds into the OBG-type G domain. Residues 166 to 173 (GMPNAGKS), 191 to 195 (FTTLH), 213 to 216 (DIPG), 284 to 287 (NKVD), and 329 to 331 (SAL) contribute to the GTP site. Mg(2+) is bound by residues serine 173 and threonine 193.

This sequence belongs to the TRAFAC class OBG-HflX-like GTPase superfamily. OBG GTPase family. Monomer. Mg(2+) is required as a cofactor.

The protein localises to the cytoplasm. Its function is as follows. An essential GTPase which binds GTP, GDP and possibly (p)ppGpp with moderate affinity, with high nucleotide exchange rates and a fairly low GTP hydrolysis rate. Plays a role in control of the cell cycle, stress response, ribosome biogenesis and in those bacteria that undergo differentiation, in morphogenesis control. This chain is GTPase Obg, found in Chromobacterium violaceum (strain ATCC 12472 / DSM 30191 / JCM 1249 / CCUG 213 / NBRC 12614 / NCIMB 9131 / NCTC 9757 / MK).